We begin with the raw amino-acid sequence, 201 residues long: FMN-dependent NADH:quinone oxidoreductase (201 aa).

FMN contacts are provided by residues Ser-10, 16–18 (SQS), 96–99 (MYNF), and 140–143 (SRGG).

This sequence belongs to the azoreductase type 1 family. In terms of assembly, homodimer. FMN is required as a cofactor.

It catalyses the reaction 2 a quinone + NADH + H(+) = 2 a 1,4-benzosemiquinone + NAD(+). The catalysed reaction is N,N-dimethyl-1,4-phenylenediamine + anthranilate + 2 NAD(+) = 2-(4-dimethylaminophenyl)diazenylbenzoate + 2 NADH + 2 H(+). In terms of biological role, quinone reductase that provides resistance to thiol-specific stress caused by electrophilic quinones. Also exhibits azoreductase activity. Catalyzes the reductive cleavage of the azo bond in aromatic azo compounds to the corresponding amines. In Salmonella paratyphi A (strain ATCC 9150 / SARB42), this protein is FMN-dependent NADH:quinone oxidoreductase.